Here is a 957-residue protein sequence, read N- to C-terminus: Plasma membrane ATPase 1 (957 aa).

Residues 1 to 66 (MGEEKPEVLD…EKKDSKLLKF (66 aa)) are Cytoplasmic-facing. Residues 67-86 (LGFMWNPLSWVMEAAAIMAI) form a helical membrane-spanning segment. Topologically, residues 87–98 (ALANGGGKPPDW) are extracellular. Residues 99 to 119 (QDFVGIITLLIINSTISFIEE) traverse the membrane as a helical segment. The Cytoplasmic portion of the chain corresponds to 120 to 248 (NNAGNAAAAL…GHFQKVLTAI (129 aa)). A helical transmembrane segment spans residues 249–269 (GNFCICSIAVGMIIEIIVMYP). Over 270–279 (IQHRAYRPGI) the chain is Extracellular. The chain crosses the membrane as a helical span at residues 280-301 (DNLLVLLIGGIPIAMPTVLSVT). Topologically, residues 302–648 (MAIGSHRLAQ…TSRAIFQRMK (347 aa)) are cytoplasmic. Residue D334 is the 4-aspartylphosphate intermediate of the active site. Positions 593 and 597 each coordinate Mg(2+). Residues 649 to 670 (NYTIYAVSITIRIVLGFMLLAL) form a helical membrane-spanning segment. Residues 671–675 (IWKFD) lie on the Extracellular side of the membrane. A helical transmembrane segment spans residues 676 to 698 (FPPFMVLIIAILNDGTIMTISKD). The Cytoplasmic segment spans residues 699 to 714 (RVKPSPLPDSWKLAEI). Residues 715–735 (FTTGIVLGGYLAMMTVIFFWA) form a helical membrane-spanning segment. Over 736 to 760 (AYKTNFFPHVFGVSTLEKTATDDFR) the chain is Extracellular. Residues 761–781 (KLASAIYLQVSIISQALIFVT) form a helical membrane-spanning segment. The Cytoplasmic segment spans residues 782 to 793 (RSRSWSFVERPG). The chain crosses the membrane as a helical span at residues 794–814 (FLLVIAFVIAQLVATLIAVYA). The Extracellular segment spans residues 815-823 (NWSFAAIEG). A helical transmembrane segment spans residues 824–844 (IGWGWAGVIWIYNLVFYIPLD). Over 845–957 (IIKFFIRYAL…IETIQQAYTV (113 aa)) the chain is Cytoplasmic.

It belongs to the cation transport ATPase (P-type) (TC 3.A.3) family. Type IIIA subfamily. Expressed in roots, stems, leaves from both vegetative and flowering plants, and flowers at early and late stages of development with highest expression levels found in flowers and stem.

It is found in the cell membrane. It catalyses the reaction ATP + H2O + H(+)(in) = ADP + phosphate + 2 H(+)(out). Functionally, the plasma membrane ATPase of plants and fungi is a hydrogen ion pump. The proton gradient it generates drives the active transport of nutrients by H(+)-symport. The resulting external acidification and/or internal alkinization may mediate growth responses. The protein is Plasma membrane ATPase 1 (PMA1) of Nicotiana plumbaginifolia (Leadwort-leaved tobacco).